The chain runs to 218 residues: GTP cyclohydrolase 1 (218 aa).

Zn(2+) contacts are provided by Cys-109, His-112, and Cys-180.

It belongs to the GTP cyclohydrolase I family. In terms of assembly, toroid-shaped homodecamer, composed of two pentamers of five dimers.

It carries out the reaction GTP + H2O = 7,8-dihydroneopterin 3'-triphosphate + formate + H(+). The protein operates within cofactor biosynthesis; 7,8-dihydroneopterin triphosphate biosynthesis; 7,8-dihydroneopterin triphosphate from GTP: step 1/1. This Mannheimia succiniciproducens (strain KCTC 0769BP / MBEL55E) protein is GTP cyclohydrolase 1.